We begin with the raw amino-acid sequence, 172 residues long: Translation initiation factor IF-3 (172 aa).

It belongs to the IF-3 family. As to quaternary structure, monomer.

The protein localises to the cytoplasm. IF-3 binds to the 30S ribosomal subunit and shifts the equilibrium between 70S ribosomes and their 50S and 30S subunits in favor of the free subunits, thus enhancing the availability of 30S subunits on which protein synthesis initiation begins. The sequence is that of Translation initiation factor IF-3 from Campylobacter concisus (strain 13826).